The following is a 492-amino-acid chain: ATP synthase subunit beta, chloroplastic (492 aa).

Residue 170–177 participates in ATP binding; it reads GGAGVGKT.

The protein belongs to the ATPase alpha/beta chains family. In terms of assembly, F-type ATPases have 2 components, CF(1) - the catalytic core - and CF(0) - the membrane proton channel. CF(1) has five subunits: alpha(3), beta(3), gamma(1), delta(1), epsilon(1). CF(0) has four main subunits: a(1), b(1), b'(1) and c(9-12).

The protein resides in the plastid. It localises to the chloroplast thylakoid membrane. The enzyme catalyses ATP + H2O + 4 H(+)(in) = ADP + phosphate + 5 H(+)(out). Produces ATP from ADP in the presence of a proton gradient across the membrane. The catalytic sites are hosted primarily by the beta subunits. The polypeptide is ATP synthase subunit beta, chloroplastic (Pinus thunbergii (Japanese black pine)).